The sequence spans 219 residues: N-(5'-phosphoribosyl)anthranilate isomerase (219 aa).

This sequence belongs to the TrpF family.

The catalysed reaction is N-(5-phospho-beta-D-ribosyl)anthranilate = 1-(2-carboxyphenylamino)-1-deoxy-D-ribulose 5-phosphate. It participates in amino-acid biosynthesis; L-tryptophan biosynthesis; L-tryptophan from chorismate: step 3/5. The chain is N-(5'-phosphoribosyl)anthranilate isomerase from Dehalococcoides mccartyi (strain ATCC BAA-2266 / KCTC 15142 / 195) (Dehalococcoides ethenogenes (strain 195)).